A 492-amino-acid chain; its full sequence is NADH-quinone oxidoreductase subunit N (492 aa).

The next 14 helical transmembrane spans lie at 13 to 33 (MMTPEFIVLGTALILSLMDLF), 42 to 62 (PLAWIAFVGVAIALIATIGLI), 79 to 99 (FGKAFKLLLLAGGALSLLLAF), 111 to 131 (GEFYYLLLCALLGAMIMASSG), 133 to 153 (LITLFVGLELLSISSYILAGI), 168 to 188 (VINGGISTAITLFGMSYIFGL), 211 to 231 (YILAIAFLMMLVGLSFKISSV), 251 to 271 (FLSVVSKTAGFVIVLRLFITI), 284 to 304 (SLLFSMQDYIAFLAGATMIIG), 318 to 340 (FAYSSIAHAGYILVGFAAMSWVM), 344 to 366 (IWFYLLAYLFMNLGAFAILQRIS), 388 to 408 (AVAMGIFLLSLAGIPGTAGFI), 426 to 446 (VLAAVMIATTVVSYVYYFGIF), and 463 to 483 (PIGLAMVVVLCALGTLLFGVV).

The protein belongs to the complex I subunit 2 family. NDH-1 is composed of 14 different subunits. Subunits NuoA, H, J, K, L, M, N constitute the membrane sector of the complex.

The protein resides in the cell membrane. It catalyses the reaction a quinone + NADH + 5 H(+)(in) = a quinol + NAD(+) + 4 H(+)(out). Functionally, NDH-1 shuttles electrons from NADH, via FMN and iron-sulfur (Fe-S) centers, to quinones in the respiratory chain. The immediate electron acceptor for the enzyme in this species is believed to be a menaquinone. Couples the redox reaction to proton translocation (for every two electrons transferred, four hydrogen ions are translocated across the cytoplasmic membrane), and thus conserves the redox energy in a proton gradient. The sequence is that of NADH-quinone oxidoreductase subunit N from Geobacillus sp. (strain WCH70).